Reading from the N-terminus, the 163-residue chain is ADP-ribosylation factor-like protein 2-binding protein (163 aa).

It belongs to the ARL2BP family. Interacts with GTP bound ARL2 and ARL3; the complex ARL2-ARL2BP as well as ARL2BP alone, binds to SLC25A4/ANT1. Interaction with ARL2 may be required for cilia basal body localization. Interacts with STAT3; interaction is enhanced with ARL2. Found in a complex with ARL2BP, ARL2 and SLC25A6. Found in a complex with ARL2, ARL2BP and SLC25A4. Interacts with STAT2, STAT3 and STAT4.

Its subcellular location is the cytoplasm. It localises to the mitochondrion intermembrane space. The protein resides in the cytoskeleton. The protein localises to the microtubule organizing center. It is found in the centrosome. Its subcellular location is the nucleus. It localises to the spindle. The protein resides in the cilium basal body. Its function is as follows. Together with ARL2, plays a role in the nuclear translocation, retention and transcriptional activity of STAT3. May play a role as an effector of ARL2. The protein is ADP-ribosylation factor-like protein 2-binding protein (ARL2BP) of Macaca fascicularis (Crab-eating macaque).